The following is a 558-amino-acid chain: Two-component response regulator-like APRR5 (558 aa).

One can recognise a Response regulatory domain in the interval 51–169 (RVLLVEADDS…ELRNLWQHVW (119 aa)). The disordered stretch occupies residues 180–233 (FPWNESVGQQKAEGASANNSNGKRDDHVVSGNGGDAQSSCTRPEMEGESADVEV). The stretch at 240 to 260 (QMECAKSQFNETRLLANELQS) forms a coiled coil. Disordered regions lie at residues 297 to 319 (SLRRPNASENQSSGDRPSLHPSS) and 535 to 558 (KKLAEQRPRIKGQFVRQVQSTQAP). The span at 303 to 319 (ASENQSSGDRPSLHPSS) shows a compositional bias: polar residues. One can recognise a CCT domain in the interval 509–551 (REAALTKFRMKRKDRCYEKKVRYESRKKLAEQRPRIKGQFVRQ).

This sequence belongs to the ARR-like family. Interacts with ADO1 and ADO2. Interacts with SPY (via N-terminus). Post-translationally, phosphorylation varies throughout the diurnal cycle and enhances ADO1 binding. In terms of processing, O-fucosylated by SPY. O-fucosylation promotes APRR5 proteolysis.

Its subcellular location is the nucleus. Its function is as follows. Transcriptional repressor of CCA1 and LHY, thereby controlling photoperiodic flowering response. Involved in the positive and negative feedback loops of the circadian clock. With RVE8, forms a negative feedback loop of the circadian clock. Expression of several members of the ARR-like family is controlled by circadian rhythm. Proteolytic substrate of the E3 ubiquitin ligase SCF(ADO1) complex. APRR9, APRR7, and APRR5 coordinately act on the upstream region of the target genes to repress their expression from noon until midnight. The particular coordinated sequential expression of APRR9, APRR7, APRR5, APRR3 and APPR1 result to circadian waves that may be at the basis of the endogenous circadian clock. Negative regulator of shade avoidance response. Involved in the inhibition of leaf expansion in shade avoidance response. The sequence is that of Two-component response regulator-like APRR5 (APRR5) from Arabidopsis thaliana (Mouse-ear cress).